The following is a 503-amino-acid chain: Cytochrome P450 11B2, mitochondrial (503 aa).

The transit peptide at 1–24 directs the protein to the mitochondrion; it reads MALRAKAEVCVAAPWLSLQRARAL. Residue phenylalanine 381 participates in 21-hydroxyprogesterone binding. Cysteine 450 is a heme binding site.

This sequence belongs to the cytochrome P450 family. It depends on heme as a cofactor. As to expression, expressed sporadically in the zona glomerulosa (zG) of the adrenal cortex (conventional zonation), as well as in aldosterone-producing cell clusters (APCCs) composed of morphological zG cells in contact with the capsule (variegated zonation).

The protein resides in the mitochondrion inner membrane. The enzyme catalyses a steroid + 2 reduced [adrenodoxin] + O2 + 2 H(+) = an 11beta-hydroxysteroid + 2 oxidized [adrenodoxin] + H2O. The catalysed reaction is 21-hydroxyprogesterone + 2 reduced [adrenodoxin] + O2 + 2 H(+) = corticosterone + 2 oxidized [adrenodoxin] + H2O. It catalyses the reaction corticosterone + 2 reduced [adrenodoxin] + O2 + 2 H(+) = 18-hydroxycorticosterone + 2 oxidized [adrenodoxin] + H2O. It carries out the reaction 18-hydroxycorticosterone + 2 reduced [adrenodoxin] + O2 + 2 H(+) = aldosterone + 2 oxidized [adrenodoxin] + 2 H2O. The enzyme catalyses 11-deoxycortisol + 2 reduced [adrenodoxin] + O2 + 2 H(+) = cortisol + 2 oxidized [adrenodoxin] + H2O. The catalysed reaction is 21-hydroxyprogesterone + 2 reduced [adrenodoxin] + O2 + 2 H(+) = 18-hydroxy-11-deoxycorticosterone + 2 oxidized [adrenodoxin] + H2O. It catalyses the reaction cortisol + 2 reduced [adrenodoxin] + O2 + 2 H(+) = 18-hydroxycortisol + 2 oxidized [adrenodoxin] + H2O. It carries out the reaction 18-hydroxycortisol + 2 reduced [adrenodoxin] + O2 + 2 H(+) = 18-oxocortisol + 2 oxidized [adrenodoxin] + 2 H2O. It participates in steroid biosynthesis. Functionally, a cytochrome P450 monooxygenase that catalyzes the biosynthesis of aldosterone, the main mineralocorticoid in the human body responsible for salt and water homeostasis, thus involved in blood pressure regulation, arterial hypertension, and the development of heart failure. Catalyzes three sequential oxidative reactions of 11-deoxycorticosterone (21-hydroxyprogesterone), namely 11-beta hydroxylation, followed by two successive oxidations at C18 yielding 18-hydroxy and then 18-oxo intermediates (that would not leave the enzyme active site during the consecutive hydroxylation reactions), ending with the formation of aldosterone. Can also produce 18-hydroxycortisol and 18-oxocortisol, derived from successive oxidations of cortisol at C18, normally found at very low levels, but significantly increased in primary aldosteronism, the most common form of secondary hypertension. Mechanistically, uses molecular oxygen inserting one oxygen atom into a substrate and reducing the second into a water molecule. Two electrons are provided by NADPH via a two-protein mitochondrial transfer system comprising flavoprotein FDXR (adrenodoxin/ferredoxin reductase) and nonheme iron-sulfur protein FDX1 or FDX2 (adrenodoxin/ferredoxin). Could also be involved in the androgen metabolic pathway. This chain is Cytochrome P450 11B2, mitochondrial, found in Homo sapiens (Human).